We begin with the raw amino-acid sequence, 375 residues long: 4,4'-diaponeurosporenoate glycosyltransferase (375 aa).

A run of 4 helical transmembrane segments spans residues 3–23 (WLSR…ALIF), 164–184 (FYEG…NVFS), 277–297 (IMTA…GLCL), and 330–350 (FSNL…KIFI).

Belongs to the glycosyltransferase 2 family. CrtQ subfamily.

The protein resides in the cell membrane. The protein operates within carotenoid biosynthesis; staphyloxanthin biosynthesis; staphyloxanthin from farnesyl diphosphate: step 4/5. Its function is as follows. Catalyzes the glycosylation of 4,4'-diaponeurosporenoate, i.e. the esterification of glucose at the C1'' position with the carboxyl group of 4,4'-diaponeurosporenic acid, to form glycosyl-4,4'-diaponeurosporenoate. This is a step in the biosynthesis of staphyloxanthin, an orange pigment present in most staphylococci strains. This chain is 4,4'-diaponeurosporenoate glycosyltransferase (crtQ), found in Staphylococcus aureus (strain USA300).